Here is a 678-residue protein sequence, read N- to C-terminus: UvrABC system protein B (678 aa).

The 160-residue stretch at 26–185 (EGLEDGEAFQ…LTTMQYTRND (160 aa)) folds into the Helicase ATP-binding domain. ATP is bound at residue 39–46 (GVTGSGKT). Positions 92 to 115 (YYDYYQPEAYVPASDTYIAKDSSV) match the Beta-hairpin motif. Residues 430-596 (QVDDLLGEIR…KLNKKITDIL (167 aa)) form the Helicase C-terminal domain. The interval 597 to 630 (EDSPYAPKPGASAAKLKAAEADGEYSPQEMQRMT) is disordered. The UVR domain occupies 635–670 (ASEIKRMEKQMYQAAKDLDFELAAKLRDDLKRLKSS).

This sequence belongs to the UvrB family. Forms a heterotetramer with UvrA during the search for lesions. Interacts with UvrC in an incision complex.

Its subcellular location is the cytoplasm. In terms of biological role, the UvrABC repair system catalyzes the recognition and processing of DNA lesions. A damage recognition complex composed of 2 UvrA and 2 UvrB subunits scans DNA for abnormalities. Upon binding of the UvrA(2)B(2) complex to a putative damaged site, the DNA wraps around one UvrB monomer. DNA wrap is dependent on ATP binding by UvrB and probably causes local melting of the DNA helix, facilitating insertion of UvrB beta-hairpin between the DNA strands. Then UvrB probes one DNA strand for the presence of a lesion. If a lesion is found the UvrA subunits dissociate and the UvrB-DNA preincision complex is formed. This complex is subsequently bound by UvrC and the second UvrB is released. If no lesion is found, the DNA wraps around the other UvrB subunit that will check the other stand for damage. The protein is UvrABC system protein B of Hydrogenovibrio crunogenus (strain DSM 25203 / XCL-2) (Thiomicrospira crunogena).